The sequence spans 332 residues: Cyclin-D1-binding protein 1 (332 aa).

Ala2 is modified (N-acetylalanine). Interaction with TCF3 stretches follow at residues 2–184 and 150–332; these read ASAT…VDFV and ISYN…CLLD. Interaction with RPLP0 regions lie at residues 2–190 and 240–332; these read ASAT…AHEE and LIIP…CLLD. A required for interaction with CCND1 region spans residues 2–208; sequence ASATAPAAAA…DPYSGLLNDT (207 aa).

Belongs to the CCNDBP1 family. As to quaternary structure, interacts with CCND1 and GRAP2. May also interact with COPS5, RPLP0, SIRT6, SYF2 and TCF3. Phosphorylated.

Its subcellular location is the cytoplasm. The protein localises to the nucleus. Its function is as follows. May negatively regulate cell cycle progression. May act at least in part via inhibition of the cyclin-D1/CDK4 complex, thereby preventing phosphorylation of RB1 and blocking E2F-dependent transcription. In Macaca fascicularis (Crab-eating macaque), this protein is Cyclin-D1-binding protein 1 (CCNDBP1).